The sequence spans 185 residues: Inner membrane-spanning protein YciB (185 aa).

5 helical membrane passes run 19-39, 53-73, 76-96, 118-138, and 149-169; these read LGGV…QIVI, IMAS…EIRY, WKVT…QFQF, TLNF…IYIS, and FKSF…GVYI.

Belongs to the YciB family.

It localises to the cell inner membrane. In terms of biological role, plays a role in cell envelope biogenesis, maintenance of cell envelope integrity and membrane homeostasis. This is Inner membrane-spanning protein YciB from Haemophilus influenzae (strain PittEE).